Consider the following 326-residue polypeptide: MAFNPFPPRQPVASARLPLTLISLDDWALATISGADSEKYLQGQVTADVAQLGEHQHLLVAHCDPKGKMWSNLRLFRRQDGFACIERRSLRDAQLTELKKYAVFSKVTIVADDENVLLGVAGFQARAALKNLFSELPDADKPLINDGVTSLLWFEHPDERFLLVTDVATADRVTEALRGEAQFNNSQQWLALNIEAGLPIIDAVNSAQFIPQATNIQALGGISFKKGCYTGQEMVARAKFRGANKRALWYLAGNASRVPEAGEDLELKMGENWRRTGTVLAAVQLDDGRVLVQVVMNNDMEADSVFRVRDDANTLSIQPLPYSLEE.

Folate is bound by residues tryptophan 27 and tryptophan 189.

This sequence belongs to the tRNA-modifying YgfZ family.

It is found in the cytoplasm. Its function is as follows. Folate-binding protein involved in regulating the level of ATP-DnaA and in the modification of some tRNAs. It is probably a key factor in regulatory networks that act via tRNA modification, such as initiation of chromosomal replication. This Enterobacter sp. (strain 638) protein is tRNA-modifying protein YgfZ.